Consider the following 155-residue polypeptide: uncharacterized protein (155 aa).

Residues 56–79 (GEKRPTHRRPYRRTKPYPKRPSML) form a disordered region. The segment covering 60–73 (PTHRRPYRRTKPYP) has biased composition (basic residues).

This is an uncharacterized protein from Sinorhizobium fredii (strain NBRC 101917 / NGR234).